Here is a 315-residue protein sequence, read N- to C-terminus: FGFR1 oncogene partner 2 homolog (315 aa).

Coiled-coil stretches lie at residues 32 to 99 (EEAE…RAME) and 156 to 183 (VVQR…ISKQ). 2 disordered regions span residues 201-222 (KAVQ…SGAS) and 238-315 (PEQP…APAT). A compositionally biased stretch (polar residues) spans 246–269 (GTTNSFNTAPVHSQSETQAPSVTL).

This sequence belongs to the SIKE family.

This Drosophila melanogaster (Fruit fly) protein is FGFR1 oncogene partner 2 homolog.